A 133-amino-acid chain; its full sequence is Small ribosomal subunit protein uS8 (133 aa).

This sequence belongs to the universal ribosomal protein uS8 family. Part of the 30S ribosomal subunit. Contacts proteins S5 and S12.

Its function is as follows. One of the primary rRNA binding proteins, it binds directly to 16S rRNA central domain where it helps coordinate assembly of the platform of the 30S subunit. This is Small ribosomal subunit protein uS8 from Synechocystis sp. (strain ATCC 27184 / PCC 6803 / Kazusa).